Here is a 274-residue protein sequence, read N- to C-terminus: Triosephosphate isomerase (274 aa).

31–33 (NWK) serves as a coordination point for substrate. The active-site Electrophile is H118. Residue E188 is the Proton acceptor of the active site. Residues G194, S234, and 255 to 256 (GG) contribute to the substrate site.

It belongs to the triosephosphate isomerase family. In terms of assembly, homodimer.

The protein resides in the cytoplasm. The catalysed reaction is D-glyceraldehyde 3-phosphate = dihydroxyacetone phosphate. The protein operates within carbohydrate biosynthesis; gluconeogenesis. It functions in the pathway carbohydrate degradation; glycolysis; D-glyceraldehyde 3-phosphate from glycerone phosphate: step 1/1. Functionally, involved in the gluconeogenesis. Catalyzes stereospecifically the conversion of dihydroxyacetone phosphate (DHAP) to D-glyceraldehyde-3-phosphate (G3P). The sequence is that of Triosephosphate isomerase from Chlamydia trachomatis serovar L2 (strain ATCC VR-902B / DSM 19102 / 434/Bu).